The primary structure comprises 299 residues: Apolipoprotein E (299 aa).

Residues 1 to 18 (MKALWAVLVVTLLAGCRA) form the signal peptide. 8 tandem repeats follow at residues 74 to 95 (VLME…EELG), 96 to 117 (PVAE…ARLR), 118 to 139 (ADME…VMLG), 140 to 161 (QSPD…KRLL), 162 to 183 (RDAE…EGAE), 184 to 205 (RGVS…VRAA), 206 to 223 (LTGQ…ERLR), and 224 to 245 (GRLE…EQME). Positions 74-245 (VLMEDTMKEV…RLDEVREQME (172 aa)) are 8 X 22 AA approximate tandem repeats. The interval 152 to 162 (HLRKLRKRLLR) is LDL and other lipoprotein receptors binding. 156–159 (LRKR) lines the heparin pocket. The segment at 204-273 (AALTGQPLRE…GWFEPMMEDM (70 aa)) is lipid-binding and lipoprotein association. 219 to 226 (GERLRGRL) serves as a coordination point for heparin. The specificity for association with VLDL stretch occupies residues 261–273 (RLKGWFEPMMEDM).

The protein belongs to the apolipoprotein A1/A4/E family. As to quaternary structure, homotetramer. May interact with ABCA1; functionally associated with ABCA1 in the biogenesis of HDLs. May interact with APP/A4 amyloid-beta peptide; the interaction is extremely stable in vitro but its physiological significance is unclear. May interact with MAPT. May interact with MAP2. In the cerebrospinal fluid, interacts with secreted SORL1. Interacts with PMEL; this allows the loading of PMEL luminal fragment on ILVs to induce fibril nucleation. Post-translationally, APOE exists as multiple glycosylated and sialylated glycoforms within cells and in plasma. The extent of glycosylation and sialylation are tissue and context specific. Glycated in plasma VLDL. In terms of processing, phosphorylated by FAM20C in the extracellular medium.

It localises to the secreted. The protein resides in the extracellular space. Its subcellular location is the extracellular matrix. It is found in the extracellular vesicle. The protein localises to the endosome. It localises to the multivesicular body. In terms of biological role, APOE is an apolipoprotein, a protein associating with lipid particles, that mainly functions in lipoprotein-mediated lipid transport between organs via the plasma and interstitial fluids. APOE is a core component of plasma lipoproteins and is involved in their production, conversion and clearance. Apolipoproteins are amphipathic molecules that interact both with lipids of the lipoprotein particle core and the aqueous environment of the plasma. As such, APOE associates with chylomicrons, chylomicron remnants, very low density lipoproteins (VLDL) and intermediate density lipoproteins (IDL) but shows a preferential binding to high-density lipoproteins (HDL). It also binds a wide range of cellular receptors including the LDL receptor/LDLR and the very low-density lipoprotein receptor/VLDLR that mediate the cellular uptake of the APOE-containing lipoprotein particles. Finally, APOE also has a heparin-binding activity and binds heparan-sulfate proteoglycans on the surface of cells, a property that supports the capture and the receptor-mediated uptake of APOE-containing lipoproteins by cells. In Heterocephalus glaber (Naked mole rat), this protein is Apolipoprotein E (APOE).